The chain runs to 552 residues: MAAKDVIFGGEARARMVEGVNILANAVKVTLGPKGRNVVLDRSFGAPTVTKDGVSVAKEIELKDKLQNMGAQMVKEVASKTSDIAGDGTTTATVLAQAIVHEGMKYVTAGMNPMDLKRGIDKAVHALIVELKKASKATTTSKEIAQVGSISANSDEAIGKIIADAMDKVGKEGVITVEDGKSLDSELDVVEGMQFDRGYLSPYFINNPEKQAALLDNPFVLLYDKKISNIRDLLPTLEQVAKSGRPLLIISEDVEGEALATLVVNTIRGILKVVAVKAPGFGDRRKAMLEDIAILTGGKVIAEEVGMSLEKVTLADLGSAKRIEVGKENTIIIDGAGAAADIEARVKQVRVQIEEATSDYDREKLQERVAKLAGGVAVIKVGAATEVEMKEKKARVEDALHATRAAVEEGIVAGGGVALLRAKQAVGTLKGANADQDAGIKLVMKAIEAPLREIVYNAGGEASVVVNAVMAGKGNYGFNAANDTYGDMIEMGILDPTKVTRTALQNAASVASLMLTTECMVSESPKDDSAAGMGGMGGGDMGGMGGMGGMGM.

ATP is bound by residues 30–33 (TLGP), K51, 87–91 (DGTTT), G415, 479–481 (NAA), and D495.

The protein belongs to the chaperonin (HSP60) family. As to quaternary structure, forms a cylinder of 14 subunits composed of two heptameric rings stacked back-to-back. Interacts with the co-chaperonin GroES.

The protein localises to the cytoplasm. The enzyme catalyses ATP + H2O + a folded polypeptide = ADP + phosphate + an unfolded polypeptide.. Together with its co-chaperonin GroES, plays an essential role in assisting protein folding. The GroEL-GroES system forms a nano-cage that allows encapsulation of the non-native substrate proteins and provides a physical environment optimized to promote and accelerate protein folding. This chain is Chaperonin GroEL 1, found in Albidiferax ferrireducens (strain ATCC BAA-621 / DSM 15236 / T118) (Rhodoferax ferrireducens).